A 260-amino-acid chain; its full sequence is Large ribosomal subunit protein eL8A (260 aa).

A disordered region spans residues Met1–Phe34.

This sequence belongs to the eukaryotic ribosomal protein eL8 family. In terms of assembly, component of the large ribosomal subunit. Mature ribosomes consist of a small (40S) and a large (60S) subunit. The 40S subunit contains about 32 different proteins and 1 molecule of RNA (18S). The 60S subunit contains 45 different proteins and 3 molecules of RNA (25S, 5.8S and 5S).

It is found in the cytoplasm. Component of the ribosome, a large ribonucleoprotein complex responsible for the synthesis of proteins in the cell. The small ribosomal subunit (SSU) binds messenger RNAs (mRNAs) and translates the encoded message by selecting cognate aminoacyl-transfer RNA (tRNA) molecules. The large subunit (LSU) contains the ribosomal catalytic site termed the peptidyl transferase center (PTC), which catalyzes the formation of peptide bonds, thereby polymerizing the amino acids delivered by tRNAs into a polypeptide chain. The nascent polypeptides leave the ribosome through a tunnel in the LSU and interact with protein factors that function in enzymatic processing, targeting, and the membrane insertion of nascent chains at the exit of the ribosomal tunnel. The chain is Large ribosomal subunit protein eL8A from Candida albicans (strain SC5314 / ATCC MYA-2876) (Yeast).